A 101-amino-acid chain; its full sequence is Apolipoprotein C-II (101 aa).

A signal peptide spans 1–22; it reads MGIRYLLVLVLVLLVLGCEVQG. Positions 66–74 are lipid binding; that stretch reads TMDEKIREI. Residues 78 to 101 form a lipoprotein lipase cofactor region; that stretch reads STAAVSTYAGIFTDQLLSMLKGDQ.

The protein belongs to the apolipoprotein C2 family. Proapolipoprotein C-II is synthesized as a sialic acid containing glycoprotein which is subsequently desialylated prior to its proteolytic processing. In terms of processing, proapolipoprotein C-II, the major form found in plasma undergoes proteolytic cleavage of its N-terminal hexapeptide to generate apolipoprotein C-II, which occurs as the minor form in plasma.

The protein resides in the secreted. Its function is as follows. Component of chylomicrons, very low-density lipoproteins (VLDL), low-density lipoproteins (LDL), and high-density lipoproteins (HDL) in plasma. Plays an important role in lipoprotein metabolism as an activator of lipoprotein lipase. Both proapolipoprotein C-II and apolipoprotein C-II can activate lipoprotein lipase. The polypeptide is Apolipoprotein C-II (APOC2) (Phoca vitulina (Harbor seal)).